The primary structure comprises 93 residues: Cobalt transport protein CbiN (93 aa).

The next 2 helical transmembrane spans lie at 5–25 and 63–83; these read LMLL…NHGG and LLFT…LGYC.

It belongs to the CbiN family. As to quaternary structure, forms an energy-coupling factor (ECF) transporter complex composed of an ATP-binding protein (A component, CbiO), a transmembrane protein (T component, CbiQ) and 2 possible substrate-capture proteins (S components, CbiM and CbiN) of unknown stoichimetry.

It is found in the cell inner membrane. The protein operates within cofactor biosynthesis; adenosylcobalamin biosynthesis. In terms of biological role, part of the energy-coupling factor (ECF) transporter complex CbiMNOQ involved in cobalt import. In Salmonella choleraesuis (strain SC-B67), this protein is Cobalt transport protein CbiN.